Reading from the N-terminus, the 513-residue chain is MPYLLEMKNITKTFGSVKAIDNVSLRLNAGEIVSLCGENGSGKSTLMKVLCGIYPHGSYEGEIIFAGEEIQASHIRDTERKGIAIIHQELALVKELTVLENIFLGNEITHNGIMDYDLMTLRYQKLLAQVSLSISPDTRVGDLGLGQQQLVEIAKALNKQVRLLILDEPTASLTEQETSVLLDIIRDLQQHGIACIYISHKLNEVKAISDTICVIRDGQHIGTRDAAGMSEDDIITMMVERELTAIYPNEPHTTGDEILRIEHLTAWHPVNRHIKRVNDVSFSLKRGEILGIAGLVGAGRTETIQCLFGVWPGQWEGKIYIDGKQVDIRNCQQAITQGIAMVPEDRKRDGIVPVMAVGKNITLAALNKFTGGISQLDDAAEQKCILESIQQLKVKTSSPDLAIGRLSGGNQQKAILARCLLLNPRILILDEPTRGIDIGAKYEIYKLINQLVQQGIAVIVISSELPEVLGLSDRVLVMHEGKLKANLINHNLTQEQVMEAALRSEHHVEKQSV.

ABC transporter domains follow at residues 5–242 (LEMK…VERE) and 259–505 (LRIE…LRSE). Residue 37–44 (GENGSGKS) participates in ATP binding.

This sequence belongs to the ABC transporter superfamily. Xylose importer (TC 3.A.1.2.4) family. As to quaternary structure, the complex is composed of two ATP-binding proteins (XylG), two transmembrane proteins (XylH) and a solute-binding protein (XylF).

The protein localises to the cell inner membrane. The enzyme catalyses D-xylose(out) + ATP + H2O = D-xylose(in) + ADP + phosphate + H(+). Part of the ABC transporter complex XylFGH involved in xylose import. Responsible for energy coupling to the transport system. The polypeptide is Xylose import ATP-binding protein XylG (Shigella flexneri).